Here is a 125-residue protein sequence, read N- to C-terminus: UPF0231 protein APP7_1023 (125 aa).

Belongs to the UPF0231 family.

This is UPF0231 protein APP7_1023 from Actinobacillus pleuropneumoniae serotype 7 (strain AP76).